The primary structure comprises 588 residues: Beta-(1--&gt;2)glucan export ATP-binding/permease protein NdvA (588 aa).

Residues 21–301 (VAVVVIANVI…MRQFVTQIFE (281 aa)) enclose the ABC transmembrane type-1 domain. A run of 6 helical transmembrane segments spans residues 22–42 (AVVV…PVLF), 57–77 (PILI…VAVA), 136–156 (THLA…AMDL), 158–178 (LSFV…WVMG), 248–268 (TAST…VKNG), and 272–292 (VGDV…LDQM). In terms of domain architecture, ABC transporter spans 335-569 (VEFRNINFGF…GGRFTSLLRT (235 aa)). 368-375 (GPTGAGKT) is an ATP binding site.

It belongs to the ABC transporter superfamily. Beta-(1--&gt;2)glucan exporter (TC 3.A.1.108.1) family. As to quaternary structure, homodimer.

Its subcellular location is the cell inner membrane. The catalysed reaction is [(1-&gt;2)-beta-D-glucosyl](n)(in) + ATP + H2O = [(1-&gt;2)-beta-D-glucosyl](n)(out) + ADP + phosphate + H(+). In terms of biological role, involved in beta-(1--&gt;2)glucan export which is required for crown gall tumor formation. Transmembrane domains (TMD) form a pore in the inner membrane and the ATP-binding domain (NBD) is responsible for energy generation. This chain is Beta-(1--&gt;2)glucan export ATP-binding/permease protein NdvA, found in Rhizobium radiobacter (Agrobacterium tumefaciens).